The primary structure comprises 459 residues: Cobyrinate a,c-diamide synthase (459 aa).

Positions 252–446 (TLALADDEAF…LHVHFAQRPE (195 aa)) constitute a GATase cobBQ-type domain. Catalysis depends on C334, which acts as the Nucleophile.

The protein belongs to the CobB/CbiA family. Monomer. Mg(2+) serves as cofactor.

It catalyses the reaction cob(II)yrinate + 2 L-glutamine + 2 ATP + 2 H2O = cob(II)yrinate a,c diamide + 2 L-glutamate + 2 ADP + 2 phosphate + 2 H(+). Its pathway is cofactor biosynthesis; adenosylcobalamin biosynthesis; cob(II)yrinate a,c-diamide from sirohydrochlorin (anaerobic route): step 10/10. Functionally, catalyzes the ATP-dependent amidation of the two carboxylate groups at positions a and c of cobyrinate, using either L-glutamine or ammonia as the nitrogen source. Is able to use other nucleotide triphosphates as substrate, such as GTP or UTP, although less efficiently than ATP. This chain is Cobyrinate a,c-diamide synthase, found in Salmonella typhimurium (strain LT2 / SGSC1412 / ATCC 700720).